A 457-amino-acid chain; its full sequence is Protein PIN-LIKES 2 (457 aa).

Topologically, residues M1–D15 are lumenal. Residues I16–L36 traverse the membrane as a helical segment. The Cytoplasmic segment spans residues A37–K54. The chain crosses the membrane as a helical span at residues L55–L75. Topologically, residues D76–P85 are lumenal. The helical transmembrane segment at V86 to C106 threads the bilayer. Over R107–T116 the chain is Cytoplasmic. A helical transmembrane segment spans residues I117–C137. Over H138–R151 the chain is Lumenal. A helical membrane pass occupies residues G152 to Y172. The Cytoplasmic portion of the chain corresponds to H173 to T291. Residues I292–G312 traverse the membrane as a helical segment. Over Y313–D322 the chain is Lumenal. Residues S323–L343 form a helical membrane-spanning segment. The Cytoplasmic portion of the chain corresponds to S344–T356. A helical transmembrane segment spans residues T357 to M377. Over S378 to K393 the chain is Lumenal. A helical transmembrane segment spans residues F394 to L414. Residues R415–A424 are Cytoplasmic-facing. A helical membrane pass occupies residues L425–F445. Topologically, residues K446–Q457 are lumenal.

Belongs to the auxin efflux carrier (TC 2.A.69.2) family. In terms of tissue distribution, expressed in seedlings, rosette and cauline leaves, flowers and siliques.

It localises to the endoplasmic reticulum membrane. Functionally, involved in cellular auxin homeostasis by regulating auxin metabolism. Regulates intracellular auxin accumulation at the endoplasmic reticulum and thus auxin availability for nuclear auxin signaling. The protein is Protein PIN-LIKES 2 of Arabidopsis thaliana (Mouse-ear cress).